The primary structure comprises 142 residues: MVITLVGEKLAKPGLEFIYYGPGEPCKTCRLARVCIGNLEPGRRYKVIKVRNIEHPCPLHEGKVRVVEVVEPAIEVLMEPRYAIAGSKLTLRFVDCNDPEKLDLVRPEGLFEGDTVKIIEILGDVECNGRKFKLVKVMREKE.

Belongs to the UPF0179 family.

The chain is UPF0179 protein PYRAB06360 from Pyrococcus abyssi (strain GE5 / Orsay).